Reading from the N-terminus, the 535-residue chain is Bifunctional purine biosynthesis protein PurH (535 aa).

The MGS-like domain occupies 6-151 (TRLPVRRALI…KNHKDVAIVV (146 aa)).

Belongs to the PurH family.

It carries out the reaction (6R)-10-formyltetrahydrofolate + 5-amino-1-(5-phospho-beta-D-ribosyl)imidazole-4-carboxamide = 5-formamido-1-(5-phospho-D-ribosyl)imidazole-4-carboxamide + (6S)-5,6,7,8-tetrahydrofolate. The enzyme catalyses IMP + H2O = 5-formamido-1-(5-phospho-D-ribosyl)imidazole-4-carboxamide. It functions in the pathway purine metabolism; IMP biosynthesis via de novo pathway; 5-formamido-1-(5-phospho-D-ribosyl)imidazole-4-carboxamide from 5-amino-1-(5-phospho-D-ribosyl)imidazole-4-carboxamide (10-formyl THF route): step 1/1. It participates in purine metabolism; IMP biosynthesis via de novo pathway; IMP from 5-formamido-1-(5-phospho-D-ribosyl)imidazole-4-carboxamide: step 1/1. In Pseudomonas putida (strain ATCC 700007 / DSM 6899 / JCM 31910 / BCRC 17059 / LMG 24140 / F1), this protein is Bifunctional purine biosynthesis protein PurH.